A 337-amino-acid polypeptide reads, in one-letter code: ATP-dependent 6-phosphofructokinase (337 aa).

Gly11 contributes to the ATP binding site. An ADP-binding site is contributed by 21–25; the sequence is RAVVR. ATP-binding positions include 72–73 and 102–105; these read RY and GDGS. Asp103 serves as a coordination point for Mg(2+). A substrate-binding site is contributed by 125 to 127; it reads TID. The Proton acceptor role is filled by Asp127. Arg154 serves as a coordination point for ADP. Residues Arg162 and 169–171 each bind substrate; that span reads MGR. Residues 185 to 187 and 214 to 216 each bind ADP; these read GAD and KNH. Substrate is bound by residues Glu223, Arg245, and 251–254; that span reads HILR.

The protein belongs to the phosphofructokinase type A (PFKA) family. ATP-dependent PFK group I subfamily. Prokaryotic clade 'B1' sub-subfamily. In terms of assembly, homotetramer. The cofactor is Mg(2+).

It localises to the cytoplasm. It carries out the reaction beta-D-fructose 6-phosphate + ATP = beta-D-fructose 1,6-bisphosphate + ADP + H(+). The protein operates within carbohydrate degradation; glycolysis; D-glyceraldehyde 3-phosphate and glycerone phosphate from D-glucose: step 3/4. Its activity is regulated as follows. Allosterically activated by ADP and other diphosphonucleosides, and allosterically inhibited by phosphoenolpyruvate. Functionally, catalyzes the phosphorylation of D-fructose 6-phosphate to fructose 1,6-bisphosphate by ATP, the first committing step of glycolysis. The protein is ATP-dependent 6-phosphofructokinase of Streptococcus mutans serotype c (strain ATCC 700610 / UA159).